The sequence spans 478 residues: Glycogen synthase (478 aa).

An ADP-alpha-D-glucose-binding site is contributed by lysine 15.

It belongs to the glycosyltransferase 1 family. Bacterial/plant glycogen synthase subfamily.

It catalyses the reaction [(1-&gt;4)-alpha-D-glucosyl](n) + ADP-alpha-D-glucose = [(1-&gt;4)-alpha-D-glucosyl](n+1) + ADP + H(+). It functions in the pathway glycan biosynthesis; glycogen biosynthesis. Its function is as follows. Synthesizes alpha-1,4-glucan chains using ADP-glucose. This chain is Glycogen synthase, found in Clostridium botulinum (strain Eklund 17B / Type B).